Consider the following 287-residue polypeptide: Ventral anterior homeobox 1b (287 aa).

Positions 1–33 (MFEKTRDMDVRCNIEENGRISKPKDNKEIRESQ) are enriched in basic and acidic residues. The interval 1–55 (MFEKTRDMDVRCNIEENGRISKPKDNKEIRESQSKMPSTYPAPGSSEGCAKNKSS) is disordered. The segment at residues 89–148 (PKRTRTSFTAEQLYRLEMEFQRCQYVVGRERTELARQLNLSETQVKVWFQNRRTKQKKDQ) is a DNA-binding region (homeobox).

This sequence belongs to the EMX homeobox family.

The protein resides in the nucleus. Involved in ventral eye development. This is Ventral anterior homeobox 1b (vax1-b) from Xenopus laevis (African clawed frog).